The sequence spans 225 residues: Imidazole glycerol phosphate synthase subunit HisH (225 aa).

The 223-residue stretch at 3–225 folds into the Glutamine amidotransferase type-1 domain; sequence TIAIVDYGMG…LYRNFVDWQP (223 aa). Cys-82 serves as the catalytic Nucleophile. Active-site residues include His-205 and Glu-207.

Heterodimer of HisH and HisF.

The protein localises to the cytoplasm. It carries out the reaction 5-[(5-phospho-1-deoxy-D-ribulos-1-ylimino)methylamino]-1-(5-phospho-beta-D-ribosyl)imidazole-4-carboxamide + L-glutamine = D-erythro-1-(imidazol-4-yl)glycerol 3-phosphate + 5-amino-1-(5-phospho-beta-D-ribosyl)imidazole-4-carboxamide + L-glutamate + H(+). The catalysed reaction is L-glutamine + H2O = L-glutamate + NH4(+). The protein operates within amino-acid biosynthesis; L-histidine biosynthesis; L-histidine from 5-phospho-alpha-D-ribose 1-diphosphate: step 5/9. Functionally, IGPS catalyzes the conversion of PRFAR and glutamine to IGP, AICAR and glutamate. The HisH subunit catalyzes the hydrolysis of glutamine to glutamate and ammonia as part of the synthesis of IGP and AICAR. The resulting ammonia molecule is channeled to the active site of HisF. The polypeptide is Imidazole glycerol phosphate synthase subunit HisH (Bordetella bronchiseptica (strain ATCC BAA-588 / NCTC 13252 / RB50) (Alcaligenes bronchisepticus)).